Reading from the N-terminus, the 147-residue chain is Nucleoside diphosphate kinase (147 aa).

The ATP site is built by K9, F57, R85, T91, R102, and N112. H115 serves as the catalytic Pros-phosphohistidine intermediate.

The protein belongs to the NDK family. In terms of assembly, homotetramer. The cofactor is Mg(2+).

Its subcellular location is the cytoplasm. It catalyses the reaction a 2'-deoxyribonucleoside 5'-diphosphate + ATP = a 2'-deoxyribonucleoside 5'-triphosphate + ADP. The enzyme catalyses a ribonucleoside 5'-diphosphate + ATP = a ribonucleoside 5'-triphosphate + ADP. In terms of biological role, major role in the synthesis of nucleoside triphosphates other than ATP. The ATP gamma phosphate is transferred to the NDP beta phosphate via a ping-pong mechanism, using a phosphorylated active-site intermediate. In Listeria welshimeri serovar 6b (strain ATCC 35897 / DSM 20650 / CCUG 15529 / CIP 8149 / NCTC 11857 / SLCC 5334 / V8), this protein is Nucleoside diphosphate kinase.